Here is a 185-residue protein sequence, read N- to C-terminus: Peptidyl-tRNA hydrolase (185 aa).

Residue tyrosine 14 participates in tRNA binding. The active-site Proton acceptor is histidine 19. 3 residues coordinate tRNA: phenylalanine 64, asparagine 66, and asparagine 112.

The protein belongs to the PTH family. As to quaternary structure, monomer.

Its subcellular location is the cytoplasm. The enzyme catalyses an N-acyl-L-alpha-aminoacyl-tRNA + H2O = an N-acyl-L-amino acid + a tRNA + H(+). In terms of biological role, hydrolyzes ribosome-free peptidyl-tRNAs (with 1 or more amino acids incorporated), which drop off the ribosome during protein synthesis, or as a result of ribosome stalling. Functionally, catalyzes the release of premature peptidyl moieties from peptidyl-tRNA molecules trapped in stalled 50S ribosomal subunits, and thus maintains levels of free tRNAs and 50S ribosomes. The sequence is that of Peptidyl-tRNA hydrolase from Lacticaseibacillus casei (strain BL23) (Lactobacillus casei).